A 288-amino-acid chain; its full sequence is MIRLYLQATKPGIVLSNLMSFIGGFLLASKGRINYLIFLVTLLGVLFIVTAGCVLNNIIDRDIDRKMERTKNRPLAIGSISILTCLIYALICSIIGIYLLYNYTNKLTMLLAIIGLIVYVGIYTKCMKRQSIYSTIIGSFSGAIPPVIGYCAVSNQFDTGALLLLLIFCLWQMPHSYAIAILRLQDYQAASIPILPIKKGIRITKNHIVIYIVAFIVTTILLNISGYTTSYQYLIVTNFINFWWLYLALQGYKEDNNDILWSKKMFIFSIIAITSLSLMMSLDSIFSR.

9 consecutive transmembrane segments (helical) span residues 8–28, 35–55, 80–100, 107–127, 132–152, 162–182, 208–228, 229–249, and 266–286; these read ATKP…FLLA, YLIF…GCVL, ISIL…IYLL, LTML…TKCM, IYST…GYCA, LLLL…IAIL, IVIY…SGYT, TSYQ…YLAL, and FIFS…DSIF.

It belongs to the UbiA prenyltransferase family. Protoheme IX farnesyltransferase subfamily.

The protein resides in the cell membrane. It catalyses the reaction heme b + (2E,6E)-farnesyl diphosphate + H2O = Fe(II)-heme o + diphosphate. Its pathway is porphyrin-containing compound metabolism; heme O biosynthesis; heme O from protoheme: step 1/1. In terms of biological role, converts heme B (protoheme IX) to heme O by substitution of the vinyl group on carbon 2 of heme B porphyrin ring with a hydroxyethyl farnesyl side group. The protein is Protoheme IX farnesyltransferase of Baumannia cicadellinicola subsp. Homalodisca coagulata.